The following is a 697-amino-acid chain: Polyribonucleotide nucleotidyltransferase (697 aa).

Positions 488 and 494 each coordinate Mg(2+). In terms of domain architecture, KH spans 555 to 614 (PTFEVITINPDKIRDVIGKGGATIRQITEETKAAIDIEDNGTVRVFGETKAAARAAIAKI). One can recognise an S1 motif domain in the interval 624 to 692 (GKIYDGKVIR…NRGRIKLSMK (69 aa)).

This sequence belongs to the polyribonucleotide nucleotidyltransferase family. Component of the RNA degradosome, which is a multiprotein complex involved in RNA processing and mRNA degradation. It depends on Mg(2+) as a cofactor.

The protein localises to the cytoplasm. The enzyme catalyses RNA(n+1) + phosphate = RNA(n) + a ribonucleoside 5'-diphosphate. Involved in mRNA degradation. Catalyzes the phosphorolysis of single-stranded polyribonucleotides processively in the 3'- to 5'-direction. This Acinetobacter baylyi (strain ATCC 33305 / BD413 / ADP1) protein is Polyribonucleotide nucleotidyltransferase.